A 471-amino-acid chain; its full sequence is MAGKTLYDKLWDSHVVKQRDDGSALIYIDRQLLHEVTSPQAFEGLRLAGRKPWRVDANLATPDHNVPTTERSAGVQGIEDPISRIQVQTLDENCEEFGIVEFKMLDKRQGIVHVIGPEQGATLPGMTIVCGDSHTSTHGAFAALAHGIGTSEVEHVLATQCLVQKKMKNLLIKVNGQLARGVTAKDVILAIIGEIGTAGGTGYAMEFAGEAIESLSMEGRMTICNMAIEAGARAGLVAVDDKTIEYVKGRPYSPKGELWDKAVAAWRDLKSDSDAVFDKVVELNGADIEPQVTWGTSPEMVAGVSGSVPDPEKAEDATAKEGISRALKYMGLQAGAAITDIKLDRVFIGSCTNSRIEDLREAAAVVKGRKVAANVKQALVVPGSGLVKEQAEQEGLDKIFIEAGLEWREPGCSMCLAMNADKLGQGEHCASTSNRNFEGRQGFGGRTHLVSPAMAAAAAVFGHFVDVRELI.

[4Fe-4S] cluster-binding residues include C351, C412, and C415.

This sequence belongs to the aconitase/IPM isomerase family. LeuC type 1 subfamily. Heterodimer of LeuC and LeuD. [4Fe-4S] cluster is required as a cofactor.

The enzyme catalyses (2R,3S)-3-isopropylmalate = (2S)-2-isopropylmalate. It participates in amino-acid biosynthesis; L-leucine biosynthesis; L-leucine from 3-methyl-2-oxobutanoate: step 2/4. Functionally, catalyzes the isomerization between 2-isopropylmalate and 3-isopropylmalate, via the formation of 2-isopropylmaleate. The polypeptide is 3-isopropylmalate dehydratase large subunit (Hahella chejuensis (strain KCTC 2396)).